We begin with the raw amino-acid sequence, 438 residues long: MRVEEFLKEKNINIGDFIRVIKEEDGEEVIYEGYVMPPYELSPGDTLVLKLENGYNIGIALSKIRRVEVIERAKVKPEIHFEAFIEGKPHLPDVTIIGTGGTIASRIDYETGAVYPAFTAEELAKAVPEIFEIANIKPKLLFNIFSEDMKPKHWIKIAHEVAKSLNSGDSGVVVAHGTDTMGYTAAALSFMLRDLGKPVILVGAQRSSDRPSSDAAMNLICSVRMSTSDVAEVMVVMHGETGDTYCLAHRGTKVRKMHTSRRDAFRSINDVPIAKVWPNGKIEFLRDDYRRRSDSEVWVDDKLEEKVALVKVYPGISSEIIEFFIDKGYRGIVIEGTGLGHTPNDIIPSIQRATEEGIAVCMTSQCIYGRVNLNVYATGRRLLKAGVIPCEDMLPETAYVKLMWVLGHTQDLEEVRRMMLTNYAGEITPYTRFDTYLR.

The 331-residue stretch at Pro92–Asn422 folds into the Asparaginase/glutaminase domain. Residues Thr102, Thr178, Asp179, and Lys256 contribute to the active site.

This sequence belongs to the asparaginase 1 family. GatD subfamily. As to quaternary structure, heterodimer of GatD and GatE.

It catalyses the reaction L-glutamyl-tRNA(Gln) + L-glutamine + ATP + H2O = L-glutaminyl-tRNA(Gln) + L-glutamate + ADP + phosphate + H(+). Allows the formation of correctly charged Gln-tRNA(Gln) through the transamidation of misacylated Glu-tRNA(Gln) in organisms which lack glutaminyl-tRNA synthetase. The reaction takes place in the presence of glutamine and ATP through an activated gamma-phospho-Glu-tRNA(Gln). The GatDE system is specific for glutamate and does not act on aspartate. The protein is Glutamyl-tRNA(Gln) amidotransferase subunit D of Pyrococcus horikoshii (strain ATCC 700860 / DSM 12428 / JCM 9974 / NBRC 100139 / OT-3).